A 174-amino-acid polypeptide reads, in one-letter code: dCTP deaminase, dUMP-forming (174 aa).

Residues 93–98 (RSSIGR), aspartate 111, 119–121 (TLE), glutamine 138, and tyrosine 151 contribute to the dCTP site. Glutamate 121 serves as the catalytic Proton donor/acceptor.

Belongs to the dCTP deaminase family. Homotrimer.

It catalyses the reaction dCTP + 2 H2O = dUMP + NH4(+) + diphosphate. The protein operates within pyrimidine metabolism; dUMP biosynthesis; dUMP from dCTP: step 1/1. Its function is as follows. Bifunctional enzyme that catalyzes both the deamination of dCTP to dUTP and the hydrolysis of dUTP to dUMP without releasing the toxic dUTP intermediate. The chain is dCTP deaminase, dUMP-forming from Leptospira biflexa serovar Patoc (strain Patoc 1 / Ames).